A 258-amino-acid polypeptide reads, in one-letter code: MIEFKDVGLVYPNGTEGLKNINVKINDGEFVVIVGLSGAGKSTFIRSINRLVTPTTGELIIDDENILNYSGNKLRMLRTKTGMIFQNYNLVKRSNVFKNVLAGRLGHTGTIRSIFNQYKKEDVALAYESLHRVNIAEKIYNRADELSGGQQQRVSIARVLTQQPKYILADEPVASLDPPTSHQVMTYLKKINREDKITTIVNLHFIDMAMEYADRIIGMRAGEVVFDGPVSEVSESTFEEIYGRSIREDDLRGGAKES.

The ABC transporter domain occupies 2–246 (IEFKDVGLVY…TFEEIYGRSI (245 aa)). 35–42 (GLSGAGKS) is a binding site for ATP.

The protein belongs to the ABC transporter superfamily. Phosphonates importer (TC 3.A.1.9.1) family. In terms of assembly, the complex is composed of two ATP-binding proteins (PhnC), two transmembrane proteins (PhnE) and a solute-binding protein (PhnD).

The protein localises to the cell membrane. It catalyses the reaction phosphonate(out) + ATP + H2O = phosphonate(in) + ADP + phosphate + H(+). Functionally, part of the ABC transporter complex PhnCDE involved in phosphonates import. Responsible for energy coupling to the transport system. This is Phosphonates import ATP-binding protein PhnC 1 from Oceanobacillus iheyensis (strain DSM 14371 / CIP 107618 / JCM 11309 / KCTC 3954 / HTE831).